Reading from the N-terminus, the 415-residue chain is Multifunctional CCA protein (415 aa).

ATP-binding residues include Gly-8 and Arg-11. Positions 8 and 11 each coordinate CTP. Mg(2+) contacts are provided by Glu-21 and Asp-23. Positions 91, 137, and 140 each coordinate ATP. Arg-91, Arg-137, and Arg-140 together coordinate CTP. Positions 226–327 (TGIHTLMTVS…IKLFSAIDVW (102 aa)) constitute an HD domain.

The protein belongs to the tRNA nucleotidyltransferase/poly(A) polymerase family. Bacterial CCA-adding enzyme type 1 subfamily. In terms of assembly, monomer. Can also form homodimers and oligomers. Requires Mg(2+) as cofactor. The cofactor is Ni(2+).

The catalysed reaction is a tRNA precursor + 2 CTP + ATP = a tRNA with a 3' CCA end + 3 diphosphate. It carries out the reaction a tRNA with a 3' CCA end + 2 CTP + ATP = a tRNA with a 3' CCACCA end + 3 diphosphate. In terms of biological role, catalyzes the addition and repair of the essential 3'-terminal CCA sequence in tRNAs without using a nucleic acid template. Adds these three nucleotides in the order of C, C, and A to the tRNA nucleotide-73, using CTP and ATP as substrates and producing inorganic pyrophosphate. tRNA 3'-terminal CCA addition is required both for tRNA processing and repair. Also involved in tRNA surveillance by mediating tandem CCA addition to generate a CCACCA at the 3' terminus of unstable tRNAs. While stable tRNAs receive only 3'-terminal CCA, unstable tRNAs are marked with CCACCA and rapidly degraded. The sequence is that of Multifunctional CCA protein from Sodalis glossinidius (strain morsitans).